The chain runs to 187 residues: GTP cyclohydrolase 1 (187 aa).

Zn(2+) is bound by residues C76, H79, and C148.

Belongs to the GTP cyclohydrolase I family. As to quaternary structure, toroid-shaped homodecamer, composed of two pentamers of five dimers.

The catalysed reaction is GTP + H2O = 7,8-dihydroneopterin 3'-triphosphate + formate + H(+). It functions in the pathway cofactor biosynthesis; 7,8-dihydroneopterin triphosphate biosynthesis; 7,8-dihydroneopterin triphosphate from GTP: step 1/1. This is GTP cyclohydrolase 1 from Streptococcus agalactiae serotype Ia (strain ATCC 27591 / A909 / CDC SS700).